Reading from the N-terminus, the 134-residue chain is uncharacterized protein (134 aa).

2 helical membrane passes run 49-69 and 71-91; these read VAVPAVLVLAPFWLIPTSLDV and LSMTLPILIPFVYFSHALNKV.

Its subcellular location is the cell membrane. This is an uncharacterized protein from Mycobacterium tuberculosis (strain ATCC 25618 / H37Rv).